A 313-amino-acid polypeptide reads, in one-letter code: Ribosomal RNA small subunit methyltransferase H (313 aa).

Residues 35–37 (GGH), D55, F80, D102, and Q109 each bind S-adenosyl-L-methionine.

This sequence belongs to the methyltransferase superfamily. RsmH family.

It is found in the cytoplasm. It catalyses the reaction cytidine(1402) in 16S rRNA + S-adenosyl-L-methionine = N(4)-methylcytidine(1402) in 16S rRNA + S-adenosyl-L-homocysteine + H(+). Specifically methylates the N4 position of cytidine in position 1402 (C1402) of 16S rRNA. The protein is Ribosomal RNA small subunit methyltransferase H of Shewanella putrefaciens (strain CN-32 / ATCC BAA-453).